The primary structure comprises 402 residues: Imidazolonepropionase (402 aa).

The Fe(3+) site is built by His66 and His68. Residues His66 and His68 each coordinate Zn(2+). Residues Arg75, Tyr138, and His171 each contribute to the 4-imidazolone-5-propanoate site. An N-formimidoyl-L-glutamate-binding site is contributed by Tyr138. Position 236 (His236) interacts with Fe(3+). Position 236 (His236) interacts with Zn(2+). Gln239 serves as a coordination point for 4-imidazolone-5-propanoate. Asp311 is a Fe(3+) binding site. Asp311 is a Zn(2+) binding site. Residues Asn313 and Gly315 each coordinate N-formimidoyl-L-glutamate. Thr316 serves as a coordination point for 4-imidazolone-5-propanoate.

It belongs to the metallo-dependent hydrolases superfamily. HutI family. Requires Zn(2+) as cofactor. Fe(3+) is required as a cofactor.

It is found in the cytoplasm. It catalyses the reaction 4-imidazolone-5-propanoate + H2O = N-formimidoyl-L-glutamate. It participates in amino-acid degradation; L-histidine degradation into L-glutamate; N-formimidoyl-L-glutamate from L-histidine: step 3/3. Catalyzes the hydrolytic cleavage of the carbon-nitrogen bond in imidazolone-5-propanoate to yield N-formimidoyl-L-glutamate. It is the third step in the universal histidine degradation pathway. The sequence is that of Imidazolonepropionase from Pseudomonas aeruginosa (strain LESB58).